The chain runs to 82 residues: uncharacterized protein (82 aa).

Residues 1–11 (MKARGSRENAS) show a composition bias toward basic and acidic residues. The interval 1 to 25 (MKARGSRENASKRRPSQTQYDTHLR) is disordered. Residues 16–25 (SQTQYDTHLR) show a composition bias toward polar residues.

This is an uncharacterized protein from Human cytomegalovirus (strain AD169) (HHV-5).